A 266-amino-acid polypeptide reads, in one-letter code: tRNA (guanine-N(7)-)-methyltransferase (266 aa).

Residues 1–32 (MSDHGRMHIPESGLATPAAAHSDDPPHPHFNR) are disordered. S-adenosyl-L-methionine-binding residues include E96, E121, D148, and D171. Residue D171 is part of the active site. Residues K175 and D207 each coordinate substrate.

The protein belongs to the class I-like SAM-binding methyltransferase superfamily. TrmB family.

It carries out the reaction guanosine(46) in tRNA + S-adenosyl-L-methionine = N(7)-methylguanosine(46) in tRNA + S-adenosyl-L-homocysteine. It participates in tRNA modification; N(7)-methylguanine-tRNA biosynthesis. In terms of biological role, catalyzes the formation of N(7)-methylguanine at position 46 (m7G46) in tRNA. The polypeptide is tRNA (guanine-N(7)-)-methyltransferase (Mycolicibacterium vanbaalenii (strain DSM 7251 / JCM 13017 / BCRC 16820 / KCTC 9966 / NRRL B-24157 / PYR-1) (Mycobacterium vanbaalenii)).